A 535-amino-acid polypeptide reads, in one-letter code: Protein PyrBI (535 aa).

An aspartate carbamoyltransferase region spans residues 1 to 341 (MENKFMGRSL…MIAGKIGDDY (341 aa)). Residues 342–370 (KGPEPKSCERVEDEDYIVEVPINNSKESK) are linker. The tract at residues 371-535 (VETFSEGVRP…FKEIWGEKKN (165 aa)) is aspartate carbamoyltransferase regulatory region. Residues C488, C493, C517, and C520 each coordinate Zn(2+).

It in the N-terminal section; belongs to the aspartate/ornithine carbamoyltransferase superfamily. ATCase family. The protein in the C-terminal section; belongs to the PyrI family.

The enzyme catalyses carbamoyl phosphate + L-aspartate = N-carbamoyl-L-aspartate + phosphate + H(+). It functions in the pathway pyrimidine metabolism; UMP biosynthesis via de novo pathway; (S)-dihydroorotate from bicarbonate: step 2/3. The protein is Protein PyrBI (pyrBI) of Treponema denticola (strain ATCC 35405 / DSM 14222 / CIP 103919 / JCM 8153 / KCTC 15104).